A 290-amino-acid chain; its full sequence is 2-dehydropantoate 2-reductase (290 aa).

NADP(+)-binding positions include 8–13 (GPGAVG), N98, and A124. A substrate-binding site is contributed by N98. K175 (proton donor) is an active-site residue. Residues N179 and S244 each coordinate substrate. E256 contributes to the NADP(+) binding site.

The protein belongs to the ketopantoate reductase family.

It localises to the cytoplasm. It carries out the reaction (R)-pantoate + NADP(+) = 2-dehydropantoate + NADPH + H(+). It functions in the pathway cofactor biosynthesis; (R)-pantothenate biosynthesis; (R)-pantoate from 3-methyl-2-oxobutanoate: step 2/2. In terms of biological role, catalyzes the NADPH-dependent reduction of ketopantoate into pantoic acid. The polypeptide is 2-dehydropantoate 2-reductase (Caulobacter vibrioides (strain ATCC 19089 / CIP 103742 / CB 15) (Caulobacter crescentus)).